Here is a 216-residue protein sequence, read N- to C-terminus: Uracil phosphoribosyltransferase (216 aa).

5-phospho-alpha-D-ribose 1-diphosphate-binding positions include R85, R110, and 135–143 (DPMVATGYS). Residues I200 and 205 to 207 (GDA) contribute to the uracil site. D206 is a binding site for 5-phospho-alpha-D-ribose 1-diphosphate.

It belongs to the UPRTase family. It depends on Mg(2+) as a cofactor.

It catalyses the reaction UMP + diphosphate = 5-phospho-alpha-D-ribose 1-diphosphate + uracil. It participates in pyrimidine metabolism; UMP biosynthesis via salvage pathway; UMP from uracil: step 1/1. Allosterically activated by GTP. Catalyzes the conversion of uracil and 5-phospho-alpha-D-ribose 1-diphosphate (PRPP) to UMP and diphosphate. This Ralstonia pickettii (strain 12J) protein is Uracil phosphoribosyltransferase.